Reading from the N-terminus, the 281-residue chain is Putative phosphatase/phosphodiesterase MPN_349 (281 aa).

Aspartate 12, glutamate 43, asparagine 44, and asparagine 71 together coordinate Fe cation. Histidine 72 (proton donor) is an active-site residue. Fe cation is bound by residues histidine 158, histidine 183, and histidine 185.

The protein belongs to the YmdB-like family. Requires Fe(3+) as cofactor.

The chain is Putative phosphatase/phosphodiesterase MPN_349 from Mycoplasma pneumoniae (strain ATCC 29342 / M129 / Subtype 1) (Mycoplasmoides pneumoniae).